Here is a 524-residue protein sequence, read N- to C-terminus: Probable metalloreductase AIM14 (524 aa).

A run of 7 helical transmembrane segments spans residues 24–44, 69–89, 104–121, 143–163, 179–199, 206–226, and 230–250; these read VNIK…VLSI, SIPF…LSIF, RLGR…FISL, WISR…LYKW, FLGV…VNVM, LFYI…AFHA, and VPLL…QRFF. The Ferric oxidoreductase domain occupies 105 to 222; that stretch reads LGRMAYCLVP…VTLWMFVVLI (118 aa). The FAD-binding FR-type domain occupies 248-372; that stretch reads RFFKSYYLHD…GGSGISFGLP (125 aa).

Belongs to the ferric reductase (FRE) family. AIM14 subfamily.

It localises to the membrane. Probable cell surface metalloreductase. May be involved in iron or copper homeostasis. The chain is Probable metalloreductase AIM14 (AIM14) from Scheffersomyces stipitis (strain ATCC 58785 / CBS 6054 / NBRC 10063 / NRRL Y-11545) (Yeast).